The sequence spans 59 residues: Small ribosomal subunit protein bS21 (59 aa).

It belongs to the bacterial ribosomal protein bS21 family.

The protein is Small ribosomal subunit protein bS21 of Acaryochloris marina (strain MBIC 11017).